The following is a 76-amino-acid chain: Secreted RxLR effector protein 31 (76 aa).

Positions 1 to 24 (MRHCACLFHLFLIGFLCNVYFSAC) are cleaved as a signal peptide. The RxLR-dEER motif lies at 49-64 (RILRANDSEFLLTEER). Residue Asn-54 is glycosylated (N-linked (GlcNAc...) asparagine).

It belongs to the RxLR effector family.

It localises to the secreted. Its subcellular location is the host nucleus. It is found in the host cytoplasm. Functionally, secreted effector that dos not suppress the host cell death induced by cell death-inducing proteins. The protein is Secreted RxLR effector protein 31 of Plasmopara viticola (Downy mildew of grapevine).